The chain runs to 752 residues: MSLLLSNSALVGPKFRSSRISHASASLDIGLQRATSPQNASVATCFEETKGRIAKLFHKNELSVSTYDTAWVAMVPSPTSSEEPCFPACLNWLLENQCHDGSWARPHHHHMLKKDVLSSTLACILALKKWGVGEEQISRGLHFVELNFASATEKGQITPMGFDIIFPAMLDNARGLSLNLQLEPTTLNDLIYKRDLELKRCNQSNSAEKEVYWAHIAEGMGKLQDWESVMKYQRKNGSLFNSPSTTAAAFIALRNSDCLNYLYSAMNKFGSAVPAVYPLDIYSQLCLVDNLERLGISRFFSTEIQSVLDDTYRCWLDGDEEIFMDASTCALAFRTLRMNGYSVTSDSFTKAVQDCFSSSIPSHMRDVNTTLELYRASEIMLYPDEIELEKQHSRLRSLLEHELSSGSIQSSQLNAVVKHALDYPFYAILDRMAKKKTIEHYEFDDTRILKTSFCSPTFGNKDFLSLSVEDYNRCQAIHRKEFRELDRWFKETKLDELKFARQKYTYSYCTAAASFASPELSDARMSWAKNSVLIGIVDDLFDVKGSVEEKQNLIKLVELWDVDVSTQCCSQSVQIIFSALRSTICEIGDKGFKIQGRSITDHIIAIWLDVLYNMMKESEWAENKSVPTIDEYMKISHVSSGLGPVVLPSLYLVGPKLSQEMVNHSEYHSLFKLMSTCCRLLNDIRSYEREVEGGKPNALALYRVSSGGEMMMSKEAAISELERLIERQRRELMRTILEESVIPKCCKEIFGH.

Residues Met-1–Asp-28 constitute a chloroplast transit peptide. 4 residues coordinate Mg(2+): Asp-538, Asp-542, Asn-682, and Glu-690. The short motif at Asp-538–Asp-542 is the DDXXD motif element.

The protein belongs to the terpene synthase family. The cofactor is Mg(2+). As to expression, highly expressed in leaves.

The protein localises to the plastid. It is found in the chloroplast. It functions in the pathway secondary metabolite biosynthesis; terpenoid biosynthesis. Its function is as follows. Involved in the biosynthesis of ent-kaurene diterpenoids natural products such as oridonin, miltiradiene, eriocalyxin B and nezukol, known to exhibit antitumor, anti-inflammatory and antibacterial activities. Catalyzes the conversion of ent-copalyl diphosphate (ent-CPP) to ent-isopimaradiene like compounds. The polypeptide is Kaurene synthase like 2, chloroplastic (Isodon rubescens (Rabdosia rubescens)).